Reading from the N-terminus, the 398-residue chain is Protein-glutamate methylesterase/protein-glutamine glutaminase (398 aa).

Residues 4-121 enclose the Response regulatory domain; sequence KVLVVDDSSF…ATNKDDAILL (118 aa). Residue aspartate 55 is modified to 4-aspartylphosphate. A disordered region spans residues 133–200; sequence RMYRSSSLTP…SANPTTSSIS (68 aa). 2 stretches are compositionally biased toward polar residues: residues 136-146 and 168-200; these read RSSSLTPTSTI and RLAS…SSIS. One can recognise a CheB-type methylesterase domain in the interval 205 to 398; the sequence is SGKQYKLLLI…EAILKESSRG (194 aa). Catalysis depends on residues serine 217, histidine 244, and aspartate 340.

It belongs to the CheB family. In terms of processing, phosphorylated by CheA. Phosphorylation of the N-terminal regulatory domain activates the methylesterase activity.

Its subcellular location is the cytoplasm. It carries out the reaction [protein]-L-glutamate 5-O-methyl ester + H2O = L-glutamyl-[protein] + methanol + H(+). The enzyme catalyses L-glutaminyl-[protein] + H2O = L-glutamyl-[protein] + NH4(+). Involved in chemotaxis. Part of a chemotaxis signal transduction system that modulates chemotaxis in response to various stimuli. Catalyzes the demethylation of specific methylglutamate residues introduced into the chemoreceptors (methyl-accepting chemotaxis proteins or MCP) by CheR. Also mediates the irreversible deamidation of specific glutamine residues to glutamic acid. This chain is Protein-glutamate methylesterase/protein-glutamine glutaminase, found in Shewanella frigidimarina (strain NCIMB 400).